Consider the following 961-residue polypeptide: RNA polymerase II subunit A C-terminal domain phosphatase (961 aa).

Position 1 is an N-acetylmethionine (M1). In terms of domain architecture, FCP1 homology spans 178–344 (HRNRKLVLMV…SRESQTRKKV (167 aa)). The interval 328–589 (DMNAPPGSRE…EEEDTDEDDH (262 aa)) is disordered. Positions 394–406 (DSPRPGKPDERDI) are enriched in basic and acidic residues. S395 is subject to Phosphoserine. The span at 450-462 (LDFDLSSDSESSS) shows a compositional bias: acidic residues. Residues 463 to 475 (ESEGTKSSSSASD) are compositionally biased toward low complexity. Positions 575-588 (SMEEEEEEDTDEDD) are enriched in acidic residues. Residues 629 to 728 (LKSKVLADVA…DKVEEQLFPL (100 aa)) form the BRCT domain. Residues S674 and S740 each carry the phosphoserine modification. Disordered stretches follow at residues 730-752 (DDHT…GVPP) and 780-949 (KLIR…ADEM). K780 bears the N6-acetyllysine mark. Polar residues predominate over residues 793–803 (SSSLPIRQEPS). A Phosphoserine modification is found at S839. A compositionally biased stretch (basic and acidic residues) spans 850-859 (CKEDLESMDK). 2 stretches are compositionally biased toward acidic residues: residues 860–873 (EVDD…DDSD) and 937–947 (NEDEGSSSEAD). Phosphoserine is present on residues S869 and S872.

As to quaternary structure, homodimer. Interacts with GTF2F1. Interacts with WDR77, SNRPB and SNRNP70. In terms of processing, phosphorylated. In the presence of TFIIF, the phosphorylated form has an increased CTD phosphatase activity. The phosphorylation is required for the physical interaction with GTF2F1. Ubiquitously expressed.

The protein resides in the nucleus. The protein localises to the cytoplasm. It is found in the cytoskeleton. It localises to the microtubule organizing center. Its subcellular location is the centrosome. The protein resides in the spindle pole. The protein localises to the midbody. It carries out the reaction O-phospho-L-seryl-[protein] + H2O = L-seryl-[protein] + phosphate. The catalysed reaction is O-phospho-L-threonyl-[protein] + H2O = L-threonyl-[protein] + phosphate. Its function is as follows. Processively dephosphorylates 'Ser-2' and 'Ser-5' of the heptad repeats YSPTSPS in the C-terminal domain of the largest RNA polymerase II subunit. This promotes the activity of RNA polymerase II. Plays a role in the exit from mitosis by dephosphorylating crucial mitotic substrates (USP44, CDC20 and WEE1) that are required for M-phase-promoting factor (MPF)/CDK1 inactivation. The protein is RNA polymerase II subunit A C-terminal domain phosphatase (CTDP1) of Homo sapiens (Human).